The following is a 193-amino-acid chain: dTTP/UTP pyrophosphatase (193 aa).

The Proton acceptor role is filled by D73.

It belongs to the Maf family. YhdE subfamily. A divalent metal cation is required as a cofactor.

Its subcellular location is the cytoplasm. The enzyme catalyses dTTP + H2O = dTMP + diphosphate + H(+). The catalysed reaction is UTP + H2O = UMP + diphosphate + H(+). In terms of biological role, nucleoside triphosphate pyrophosphatase that hydrolyzes dTTP and UTP. May have a dual role in cell division arrest and in preventing the incorporation of modified nucleotides into cellular nucleic acids. This is dTTP/UTP pyrophosphatase from Caulobacter vibrioides (strain ATCC 19089 / CIP 103742 / CB 15) (Caulobacter crescentus).